The primary structure comprises 144 residues: D-aminoacyl-tRNA deacylase (144 aa).

The short motif at 136-137 (GP) is the Gly-cisPro motif, important for rejection of L-amino acids element.

The protein belongs to the DTD family. As to quaternary structure, homodimer.

It is found in the cytoplasm. The catalysed reaction is glycyl-tRNA(Ala) + H2O = tRNA(Ala) + glycine + H(+). It carries out the reaction a D-aminoacyl-tRNA + H2O = a tRNA + a D-alpha-amino acid + H(+). In terms of biological role, an aminoacyl-tRNA editing enzyme that deacylates mischarged D-aminoacyl-tRNAs. Also deacylates mischarged glycyl-tRNA(Ala), protecting cells against glycine mischarging by AlaRS. Acts via tRNA-based rather than protein-based catalysis; rejects L-amino acids rather than detecting D-amino acids in the active site. By recycling D-aminoacyl-tRNA to D-amino acids and free tRNA molecules, this enzyme counteracts the toxicity associated with the formation of D-aminoacyl-tRNA entities in vivo and helps enforce protein L-homochirality. This Histophilus somni (strain 129Pt) (Haemophilus somnus) protein is D-aminoacyl-tRNA deacylase.